The chain runs to 574 residues: Glutamyl-tRNA(Gln) amidotransferase subunit B, mitochondrial (574 aa).

The N-terminal 12 residues, Met-1–Pro-12, are a transit peptide targeting the mitochondrion. The interval Pro-34–Glu-62 is disordered.

It belongs to the GatB/GatE family. GatB subfamily. In terms of assembly, subunit of the heterotrimeric GatCAB amidotransferase (AdT) complex, composed of A, B and C subunits.

It localises to the mitochondrion. It catalyses the reaction L-glutamyl-tRNA(Gln) + L-glutamine + ATP + H2O = L-glutaminyl-tRNA(Gln) + L-glutamate + ADP + phosphate + H(+). Its function is as follows. Allows the formation of correctly charged Gln-tRNA(Gln) through the transamidation of misacylated Glu-tRNA(Gln) in the mitochondria. The reaction takes place in the presence of glutamine and ATP through an activated gamma-phospho-Glu-tRNA(Gln). The polypeptide is Glutamyl-tRNA(Gln) amidotransferase subunit B, mitochondrial (Ajellomyces capsulatus (strain H143) (Darling's disease fungus)).